The chain runs to 352 residues: MTSPSSILLYCRRGFEKECAAEILVQTQAAGISGHVRAKENSAYVVFVAHEPEILANRAARLRFDALIFARQRIFASGPLADLPVDDRITPLLDTAAGLQRRYSTLWLETADTNEAKELAAFTRKFERPFAAAAAGLLGGGPQAPRLHVFFLTSTAAYLGYTLPDDSAPWPCGIPRLKLPRSAPSRSTLKLEEAFLVFVDRPETMLRPGMSAVDLGAAPGGWTWQLVRRHIRTTAVDNGNLDPALLDSGLVTHLRTDGFRFRPSRPVDWLVCDMVEQPSRIARLVADWAADGAFRYAVFNLKLPMNRRYEEVERCRGLIEERLAAQGVSHRLRFRQLYHDREEVTGFLELVS.

Residues serine 187, 218 to 221 (APGG), aspartate 237, aspartate 257, and aspartate 273 contribute to the S-adenosyl-L-methionine site. Catalysis depends on lysine 302, which acts as the Proton acceptor.

The protein belongs to the class I-like SAM-binding methyltransferase superfamily. RNA methyltransferase RlmE family. RlmM subfamily. In terms of assembly, monomer.

It localises to the cytoplasm. It carries out the reaction cytidine(2498) in 23S rRNA + S-adenosyl-L-methionine = 2'-O-methylcytidine(2498) in 23S rRNA + S-adenosyl-L-homocysteine + H(+). Functionally, catalyzes the 2'-O-methylation at nucleotide C2498 in 23S rRNA. In Methylococcus capsulatus (strain ATCC 33009 / NCIMB 11132 / Bath), this protein is Ribosomal RNA large subunit methyltransferase M.